A 442-amino-acid chain; its full sequence is Trigger factor (442 aa).

One can recognise a PPIase FKBP-type domain in the interval 176–259 (GDFISLSLYV…VNAVIEISSP (84 aa)).

The protein belongs to the FKBP-type PPIase family. Tig subfamily.

It localises to the cytoplasm. It catalyses the reaction [protein]-peptidylproline (omega=180) = [protein]-peptidylproline (omega=0). Functionally, involved in protein export. Acts as a chaperone by maintaining the newly synthesized protein in an open conformation. Functions as a peptidyl-prolyl cis-trans isomerase. This Chlamydia trachomatis serovar A (strain ATCC VR-571B / DSM 19440 / HAR-13) protein is Trigger factor.